The primary structure comprises 125 residues: Fluoride-specific ion channel FluC (125 aa).

4 helical membrane-spanning segments follow: residues 1–21 (MIQALLVAVGGAIGSVLRYFV), 32–52 (AFPWGTLAVNVVGCFVIGVFA), 68–88 (LLITGFLGGFTTFSAFSLDAI), and 101–121 (IYIAASVGLSMAAVFAGLAIM). Gly-75 and Thr-78 together coordinate Na(+).

It belongs to the fluoride channel Fluc/FEX (TC 1.A.43) family.

Its subcellular location is the cell inner membrane. It carries out the reaction fluoride(in) = fluoride(out). Na(+) is not transported, but it plays an essential structural role and its presence is essential for fluoride channel function. Functionally, fluoride-specific ion channel. Important for reducing fluoride concentration in the cell, thus reducing its toxicity. This Rhizobium etli (strain ATCC 51251 / DSM 11541 / JCM 21823 / NBRC 15573 / CFN 42) protein is Fluoride-specific ion channel FluC.